A 151-amino-acid chain; its full sequence is Putative olfactory receptor 13C6 (151 aa).

The Extracellular portion of the chain corresponds to 1-27 (MVSANQTASVTEFILLGLSAHPKLEKT). Asn5 carries an N-linked (GlcNAc...) asparagine glycan. The chain crosses the membrane as a helical span at residues 28 to 48 (FFVLILLMYLVILLGNGVLIL). Topologically, residues 49 to 61 (MTVSNSHLHMPMY) are cytoplasmic. The chain crosses the membrane as a helical span at residues 62 to 82 (FFLGNLSFLDICYTTSSVPLI). The Extracellular portion of the chain corresponds to 83 to 100 (LDSFLTPRKTISFSACAV). The helical transmembrane segment at 101 to 121 (QMFLSFAMGATECVLLSMMAF) threads the bilayer.

Belongs to the G-protein coupled receptor 1 family.

The protein resides in the cell membrane. Odorant receptor. The protein is Putative olfactory receptor 13C6 of Homo sapiens (Human).